The sequence spans 224 residues: uncharacterized protein (224 aa).

A run of 4 helical transmembrane segments spans residues 25 to 45, 56 to 76, 107 to 127, and 149 to 169; these read ALAW…IYGI, VFLI…VILP, ELFL…YFFV, and IFVK…VVYF.

The protein resides in the cell membrane. This is an uncharacterized protein from Mycoplasma pneumoniae (strain ATCC 29342 / M129 / Subtype 1) (Mycoplasmoides pneumoniae).